A 471-amino-acid polypeptide reads, in one-letter code: MAPADGESSPPPHVAVVAFPFSSHAAVLLSIARALAAAAAPSGATLSFLSTASSLAQLRKASSASAGHGLPGNLRFVEVPDGAPAAEESVPVPRQMQLFMEAAEAGGVKAWLEAARAAAGGARVTCVVGDAFVWPAADAAASAGAPWVPVWTAASCALLAHIRTDALREDVGDQAANRVDEPLISHPGLASYRVRDLPDGVVSGDFNYVINLLVHRMGQCLPRSAAAVALNTFPGLDPPDVTAALAEILPNCVPFGPYHLLLAEDDADTAAPADPHGCLAWLGRQPARGVAYVSFGTVACPRPDELRELAAGLEASGAPFLWSLREDSWTLLPPGFLDRAAGTGSGLVVPWAPQVAVLRHPSVGAFVTHAGWASVLEGVSSGVPMACRPFFGDQRMNARSVAHVWGFGAAFEGAMTSAGVAAAVEELLRGEEGARMRARAKVLQALVAEAFGPGGECRKNFDRFVEIVCRA.

The active-site Proton acceptor is histidine 24. Position 24 (histidine 24) interacts with an anthocyanidin. Aspartate 130 functions as the Charge relay in the catalytic mechanism. Position 152 (threonine 152) interacts with UDP-alpha-D-glucose. Histidine 161 is an an anthocyanidin binding site. UDP-alpha-D-glucose-binding residues include alanine 352, glutamine 354, histidine 369, tryptophan 372, serine 374, and glutamate 377. Glycine 392 lines the an anthocyanidin pocket. The UDP-alpha-D-glucose site is built by aspartate 393 and glutamine 394.

Belongs to the UDP-glycosyltransferase family.

It catalyses the reaction an anthocyanidin + UDP-alpha-D-glucose + H(+) = an anthocyanidin 3-O-beta-D-glucoside + UDP. Its pathway is pigment biosynthesis; anthocyanin biosynthesis. Its function is as follows. In the presence of other necessary color factors, this glycosylation reaction allows the accumulation of anthocyanin pigments. This Zea mays (Maize) protein is Anthocyanidin 3-O-glucosyltransferase (BZ1).